The chain runs to 342 residues: Peptide chain release factor 1 (342 aa).

Q211 carries the N5-methylglutamine modification. The interval 262 to 282 (KEREISQKRKSQIGTGERSEK) is disordered.

It belongs to the prokaryotic/mitochondrial release factor family. In terms of processing, methylated by PrmC. Methylation increases the termination efficiency of RF1.

The protein resides in the cytoplasm. Its function is as follows. Peptide chain release factor 1 directs the termination of translation in response to the peptide chain termination codons UAG and UAA. The sequence is that of Peptide chain release factor 1 (prfA) from Thermotoga maritima (strain ATCC 43589 / DSM 3109 / JCM 10099 / NBRC 100826 / MSB8).